Here is a 153-residue protein sequence, read N- to C-terminus: Aspartate carbamoyltransferase regulatory chain (153 aa).

The Zn(2+) site is built by C109, C114, C138, and C141.

Belongs to the PyrI family. In terms of assembly, contains catalytic and regulatory chains. It depends on Zn(2+) as a cofactor.

Functionally, involved in allosteric regulation of aspartate carbamoyltransferase. This chain is Aspartate carbamoyltransferase regulatory chain, found in Klebsiella pneumoniae subsp. pneumoniae (strain ATCC 700721 / MGH 78578).